The chain runs to 341 residues: Retinol dehydrogenase 10 (341 aa).

A helical; Signal-anchor membrane pass occupies residues 3–23 (IVVEFFVVTFKVLWAFVLAAA). 40–64 (LITGAGSGLGRLFALEFARRRALLV) serves as a coordination point for NADP(+). Serine 197 lines the substrate pocket. The active-site Proton acceptor is tyrosine 210.

Belongs to the short-chain dehydrogenases/reductases (SDR) family. In terms of tissue distribution, detected in retinal pigment epithelium (at protein level). Detected in retina, retinal pigment epithelium, and at lower levels in cornea, liver, kidney, pancreas, lung, brain and skeletal muscle.

It is found in the microsome membrane. The protein localises to the endoplasmic reticulum membrane. The enzyme catalyses all-trans-retinol + NADP(+) = all-trans-retinal + NADPH + H(+). It functions in the pathway cofactor metabolism; retinol metabolism. In terms of biological role, retinol dehydrogenase with a clear preference for NADP. Converts all-trans-retinol to all-trans-retinal. Has no detectable activity towards 11-cis-retinol, 9-cis-retinol and 13-cis-retinol. This chain is Retinol dehydrogenase 10 (RDH10), found in Bos taurus (Bovine).